We begin with the raw amino-acid sequence, 299 residues long: Lathosterol oxidase (299 aa).

3 consecutive transmembrane segments (helical) span residues 32 to 52, 79 to 99, and 117 to 137; these read ISLL…CATL, FTVK…LLEL, and IHLM…IYWI. The 129-residue stretch at 124-252 folds into the Fatty acid hydroxylase domain; sequence VSFLFFTDML…YFTLWDRIGG (129 aa). The Histidine box-1 signature appears at 138-143; that stretch reads HRGLHH. A Histidine box-2 motif is present at residues 151-155; it reads HKPHH. Residues 186 to 206 traverse the membrane as a helical segment; it reads VFPLHKVVYLGLYVLVNVWTI. Residues 228–233 carry the Histidine box-3 motif; sequence HHTDHH. Position 253 is a phosphoserine (serine 253). Residues 280 to 299 are disordered; that stretch reads FAENGCKGKKVGNGEFTKNK.

Belongs to the sterol desaturase family. It depends on Fe cation as a cofactor.

Its subcellular location is the endoplasmic reticulum membrane. The enzyme catalyses a Delta(7)-sterol + 2 Fe(II)-[cytochrome b5] + O2 + 2 H(+) = a Delta(5),Delta(7)-sterol + 2 Fe(III)-[cytochrome b5] + 2 H2O. It catalyses the reaction lathosterol + 2 Fe(II)-[cytochrome b5] + O2 + 2 H(+) = 7-dehydrocholesterol + 2 Fe(III)-[cytochrome b5] + 2 H2O. It carries out the reaction 5alpha-cholesta-7,24-dien-3beta-ol + 2 Fe(II)-[cytochrome b5] + O2 + 2 H(+) = 7-dehydrodesmosterol + 2 Fe(III)-[cytochrome b5] + 2 H2O. Its pathway is steroid biosynthesis; cholesterol biosynthesis. In terms of biological role, catalyzes the penultimate step of the biosynthesis of cholesterol, the dehydrogenation of lathosterol into 7-dehydrocholesterol (7-DHC). Cholesterol is the major sterol component in mammalian membranes and a precursor for bile acid and steroid hormone synthesis. In addition to its essential role in cholesterol biosynthesis, it also indirectly regulates ferroptosis through the production of 7-DHC. By diverting the spread of damage caused by peroxyl radicals from the phospholipid components to its sterol nucleus, 7-DHC prevents this form of cell death. The polypeptide is Lathosterol oxidase (Mus musculus (Mouse)).